The primary structure comprises 130 residues: Small ribosomal subunit protein uS11 (130 aa).

The segment at 1–21 is disordered; sequence MAPQSKRSGGRKQKKHVPNGV. Over residues 8–17 the composition is skewed to basic residues; sequence SGGRKQKKHV.

This sequence belongs to the universal ribosomal protein uS11 family. Part of the 30S ribosomal subunit. Interacts with proteins S7 and S18. Binds to IF-3.

Its function is as follows. Located on the platform of the 30S subunit, it bridges several disparate RNA helices of the 16S rRNA. Forms part of the Shine-Dalgarno cleft in the 70S ribosome. The polypeptide is Small ribosomal subunit protein uS11 (Acaryochloris marina (strain MBIC 11017)).